The sequence spans 88 residues: UPF0297 protein LAR_0520 (88 aa).

Belongs to the UPF0297 family.

This is UPF0297 protein LAR_0520 from Limosilactobacillus reuteri subsp. reuteri (strain JCM 1112) (Lactobacillus reuteri).